The primary structure comprises 339 residues: tRNA dimethylallyltransferase (339 aa).

36–43 lines the ATP pocket; the sequence is GPTGSGKT. 38-43 is a substrate binding site; sequence TGSGKT. The interval 61–64 is interaction with substrate tRNA; it reads DSMQ.

Belongs to the IPP transferase family. Monomer. Mg(2+) is required as a cofactor.

The enzyme catalyses adenosine(37) in tRNA + dimethylallyl diphosphate = N(6)-dimethylallyladenosine(37) in tRNA + diphosphate. Functionally, catalyzes the transfer of a dimethylallyl group onto the adenine at position 37 in tRNAs that read codons beginning with uridine, leading to the formation of N6-(dimethylallyl)adenosine (i(6)A). The sequence is that of tRNA dimethylallyltransferase from Chlamydia trachomatis serovar A (strain ATCC VR-571B / DSM 19440 / HAR-13).